A 32-amino-acid chain; its full sequence is Dermatoxin-J1 (32 aa).

A Glutamine amide modification is found at Q32.

In terms of tissue distribution, expressed by the skin glands.

The protein resides in the secreted. Its function is as follows. Antimicrobial peptide. This is Dermatoxin-J1 from Phasmahyla jandaia (Jandaia leaf frog).